Reading from the N-terminus, the 144-residue chain is Large ribosomal subunit protein uL11 (144 aa).

Belongs to the universal ribosomal protein uL11 family. Part of the ribosomal stalk of the 50S ribosomal subunit. Interacts with L10 and the large rRNA to form the base of the stalk. L10 forms an elongated spine to which L12 dimers bind in a sequential fashion forming a multimeric L10(L12)X complex. Post-translationally, one or more lysine residues are methylated.

Forms part of the ribosomal stalk which helps the ribosome interact with GTP-bound translation factors. The protein is Large ribosomal subunit protein uL11 of Granulibacter bethesdensis (strain ATCC BAA-1260 / CGDNIH1).